The primary structure comprises 341 residues: L-threonine 3-dehydrogenase (341 aa).

Cys38 is a binding site for Zn(2+). Catalysis depends on charge relay system residues Thr40 and His43. Zn(2+)-binding residues include His63, Glu64, Cys93, Cys96, Cys99, and Cys107. Residues Ile175, Asp195, Arg200, 262–264, and 286–287 contribute to the NAD(+) site; these read LGI and IY.

This sequence belongs to the zinc-containing alcohol dehydrogenase family. As to quaternary structure, homotetramer. Zn(2+) is required as a cofactor.

It is found in the cytoplasm. It catalyses the reaction L-threonine + NAD(+) = (2S)-2-amino-3-oxobutanoate + NADH + H(+). It participates in amino-acid degradation; L-threonine degradation via oxydo-reductase pathway; glycine from L-threonine: step 1/2. Functionally, catalyzes the NAD(+)-dependent oxidation of L-threonine to 2-amino-3-ketobutyrate. The protein is L-threonine 3-dehydrogenase of Chromobacterium violaceum (strain ATCC 12472 / DSM 30191 / JCM 1249 / CCUG 213 / NBRC 12614 / NCIMB 9131 / NCTC 9757 / MK).